We begin with the raw amino-acid sequence, 276 residues long: NH(3)-dependent NAD(+) synthetase (276 aa).

47–54 (GISGGQDS) provides a ligand contact to ATP. Aspartate 53 serves as a coordination point for Mg(2+). A deamido-NAD(+)-binding site is contributed by arginine 141. Threonine 161 is a binding site for ATP. Position 166 (glutamate 166) interacts with Mg(2+). 2 residues coordinate deamido-NAD(+): lysine 174 and aspartate 181. ATP-binding residues include lysine 190 and threonine 212. Residue 261–262 (HK) participates in deamido-NAD(+) binding.

It belongs to the NAD synthetase family. Homodimer.

The enzyme catalyses deamido-NAD(+) + NH4(+) + ATP = AMP + diphosphate + NAD(+) + H(+). The protein operates within cofactor biosynthesis; NAD(+) biosynthesis; NAD(+) from deamido-NAD(+) (ammonia route): step 1/1. Catalyzes the ATP-dependent amidation of deamido-NAD to form NAD. Uses ammonia as a nitrogen source. The protein is NH(3)-dependent NAD(+) synthetase of Levilactobacillus brevis (strain ATCC 367 / BCRC 12310 / CIP 105137 / JCM 1170 / LMG 11437 / NCIMB 947 / NCTC 947) (Lactobacillus brevis).